A 658-amino-acid chain; its full sequence is Translation factor GUF1, mitochondrial (658 aa).

The 187-residue stretch at 45–231 folds into the tr-type G domain; sequence ENYRNFSIVA…AVIDRIPPPT (187 aa). GTP contacts are provided by residues 54–61, 123–127, and 177–180; these read AHIDHGKS, DTPGH, and NKID.

Belongs to the TRAFAC class translation factor GTPase superfamily. Classic translation factor GTPase family. LepA subfamily.

It is found in the mitochondrion inner membrane. It catalyses the reaction GTP + H2O = GDP + phosphate + H(+). Its function is as follows. Promotes mitochondrial protein synthesis. May act as a fidelity factor of the translation reaction, by catalyzing a one-codon backward translocation of tRNAs on improperly translocated ribosomes. Binds to mitochondrial ribosomes in a GTP-dependent manner. The chain is Translation factor GUF1, mitochondrial from Vanderwaltozyma polyspora (strain ATCC 22028 / DSM 70294 / BCRC 21397 / CBS 2163 / NBRC 10782 / NRRL Y-8283 / UCD 57-17) (Kluyveromyces polysporus).